A 127-amino-acid chain; its full sequence is Large ribosomal subunit protein bL20 (127 aa).

Belongs to the bacterial ribosomal protein bL20 family.

In terms of biological role, binds directly to 23S ribosomal RNA and is necessary for the in vitro assembly process of the 50S ribosomal subunit. It is not involved in the protein synthesizing functions of that subunit. This Corynebacterium diphtheriae (strain ATCC 700971 / NCTC 13129 / Biotype gravis) protein is Large ribosomal subunit protein bL20.